The chain runs to 351 residues: Adenine deaminase (351 aa).

Zn(2+) contacts are provided by H19, H21, and H208. E211 acts as the Proton donor in catalysis. D288 is a binding site for Zn(2+). D289 contributes to the substrate binding site.

It belongs to the metallo-dependent hydrolases superfamily. Adenosine and AMP deaminases family. Adenine deaminase type 2 subfamily. Requires Zn(2+) as cofactor.

It is found in the cytoplasm. The protein localises to the nucleus. It carries out the reaction adenine + H2O + H(+) = hypoxanthine + NH4(+). Functionally, catalyzes the hydrolytic deamination of adenine to hypoxanthine. Plays an important role in the purine salvage pathway and in nitrogen catabolism. The polypeptide is Adenine deaminase (aah1) (Aspergillus oryzae (strain ATCC 42149 / RIB 40) (Yellow koji mold)).